We begin with the raw amino-acid sequence, 365 residues long: MNTTTELIPPTFQVNDDEEEACMFAMQLASASVLPMVLKSAIELNLLESIAKAGPGAYVSPSQLAAALPSSQPDTPVMLDRILRLLASYSVLNCKLRDLPDARVERLYGLAPVCKFLTKNSDGVSMAPLLLMNQDKILMESWYHLKDAVLDGGIPFNKAYGMTAFEYHGKDPRFNKVFNQGMSNHSTITMKKILQTYDGFGGLKTVVDVGGGTGATLNMIISKYPNLKGINFDLPHVVEDAPSYAGVEHVGGDMFVSVPKGDAIFMKWICHDWSDAHCLAFLKNCYKALPKDGKVILAECILPEAPDSKLTTKNVILIDVIMLAHNPGGKERTEKEFEAFGKQAGFKSFNKACCAYNTWVIEYYK.

Asn133 is a (E)-ferulate binding site. S-adenosyl-L-homocysteine is bound by residues Gly210, Asp233, Asp253, Met254, Met266, and Lys267. His271 functions as the Proton acceptor in the catalytic mechanism. Asp272 provides a ligand contact to (E)-5-hydroxyferulate.

This sequence belongs to the class I-like SAM-binding methyltransferase superfamily. Cation-independent O-methyltransferase family. COMT subfamily. Homodimer.

It carries out the reaction (E)-caffeate + S-adenosyl-L-methionine = (E)-ferulate + S-adenosyl-L-homocysteine + H(+). The enzyme catalyses (E)-5-hydroxyferulate + S-adenosyl-L-methionine = (E)-sinapate + S-adenosyl-L-homocysteine + H(+). Its pathway is aromatic compound metabolism; phenylpropanoid biosynthesis. Its activity is regulated as follows. Inhibited by Cu(2+), and to a lesser extent by Ni(2+), Mn(2+), Co(2+), Fe(3+) and Zn(2+). Unaffected by Fe(2+) and Mg(2+). In terms of biological role, catalyzes the conversion of caffeic acid to ferulic acid and of 5-hydroxyferulic acid to sinapic acid. The resulting products may subsequently be converted to the corresponding alcohols that are incorporated into lignins. In Ammi majus (Bishop's weed), this protein is Caffeic acid 3-O-methyltransferase.